Reading from the N-terminus, the 434-residue chain is MKAAQFFLYSLLFFASAALSSANIAEFDEYWQKKSKVAQAKAKKAYTPHPEEVTNHFNKAVHSSFEGNSTRRNLRTNKLGQCLATNPIDRCWRCKKNWSANRKDLVKCVKGFGRKTTGGAAGEIYVVTDPSDDSLTDPKFGTLRWGVIQDRPLWIIFGKSMVIRLKQELIINNDKTIDGRGANVQIAGGAQLTVQFVHNVIIHGIHIHDIKPGEGGLIRDSEKHSGIRTRSDGDGISIIGSSNIWIDHVSLARCSDGLIDVILGSTAITISNCHLTEHDDVMLLGASDTYTQDEIMQVTVAFNHFGRGLVQRMPRCRYGFVHVVNNDYTHWIMYAVGGSQHPTIISQGNRYIAPHIEAAKEVTKRDYAEPAEWSKWTWKSQGDLFVSGAFFVESGGPFENKYSKKDLIKAKPGTFVQRLTRFSGALNCKENMEC.

An N-terminal signal peptide occupies residues 1–22 (MKAAQFFLYSLLFFASAALSSA). 2 N-linked (GlcNAc...) asparagine glycosylation sites follow: N68 and N97. 3 residues coordinate Ca(2+): D232, D256, and D260. R312 is an active-site residue.

Belongs to the polysaccharide lyase 1 family. It depends on Ca(2+) as a cofactor.

The enzyme catalyses Eliminative cleavage of (1-&gt;4)-alpha-D-galacturonan to give oligosaccharides with 4-deoxy-alpha-D-galact-4-enuronosyl groups at their non-reducing ends.. Its pathway is glycan metabolism; pectin degradation; 2-dehydro-3-deoxy-D-gluconate from pectin: step 2/5. In Lilium longiflorum (Trumpet lily), this protein is Pectate lyase.